A 294-amino-acid chain; its full sequence is tRNA dimethylallyltransferase (294 aa).

10-17 (GPTAVGKT) is an ATP binding site. Position 12-17 (12-17 (TAVGKT)) interacts with substrate. The segment at 35–38 (DSQQ) is interaction with substrate tRNA.

Belongs to the IPP transferase family. Monomer. The cofactor is Mg(2+).

The enzyme catalyses adenosine(37) in tRNA + dimethylallyl diphosphate = N(6)-dimethylallyladenosine(37) in tRNA + diphosphate. Its function is as follows. Catalyzes the transfer of a dimethylallyl group onto the adenine at position 37 in tRNAs that read codons beginning with uridine, leading to the formation of N6-(dimethylallyl)adenosine (i(6)A). This chain is tRNA dimethylallyltransferase, found in Streptococcus pneumoniae serotype 4 (strain ATCC BAA-334 / TIGR4).